A 281-amino-acid polypeptide reads, in one-letter code: Shikimate dehydrogenase (NADP(+)) (281 aa).

Residues 15–17 and Thr-62 each bind shikimate; that span reads SKS. Residue Lys-66 is the Proton acceptor of the active site. Residues Asn-87 and Asp-102 each contribute to the shikimate site. NADP(+) contacts are provided by residues 127–131, 151–156, and Leu-217; these read GAGGS and NRTPER. A shikimate-binding site is contributed by Tyr-219. Gly-241 lines the NADP(+) pocket.

The protein belongs to the shikimate dehydrogenase family. As to quaternary structure, homodimer.

The catalysed reaction is shikimate + NADP(+) = 3-dehydroshikimate + NADPH + H(+). Its pathway is metabolic intermediate biosynthesis; chorismate biosynthesis; chorismate from D-erythrose 4-phosphate and phosphoenolpyruvate: step 4/7. In terms of biological role, involved in the biosynthesis of the chorismate, which leads to the biosynthesis of aromatic amino acids. Catalyzes the reversible NADPH linked reduction of 3-dehydroshikimate (DHSA) to yield shikimate (SA). This chain is Shikimate dehydrogenase (NADP(+)), found in Stenotrophomonas maltophilia (strain R551-3).